Reading from the N-terminus, the 361-residue chain is Hydroxycarboxylate dehydrogenase B (361 aa).

NAD(+)-binding positions include H48, 122 to 124 (GRI), 178 to 182 (LLDYA), H234, N270, and 313 to 316 (GEWE).

Belongs to the LDH2/MDH2 oxidoreductase family.

It catalyses the reaction 2-hydroxyglutarate + NADP(+) = 2-oxoglutarate + NADPH + H(+). It carries out the reaction 2-hydroxyglutarate + NAD(+) = 2-oxoglutarate + NADH + H(+). The catalysed reaction is 3-phenyllactate + NADP(+) = 3-phenylpyruvate + NADPH + H(+). The enzyme catalyses 3-phenyllactate + NAD(+) = 3-phenylpyruvate + NADH + H(+). It catalyses the reaction (2R)-2-hydroxy-3-(4-hydroxyphenyl)propanoate + NAD(+) = 3-(4-hydroxyphenyl)pyruvate + NADH + H(+). It carries out the reaction (2R)-2-hydroxy-3-(4-hydroxyphenyl)propanoate + NADP(+) = 3-(4-hydroxyphenyl)pyruvate + NADPH + H(+). The catalysed reaction is (2R)-3-(3,4-dihydroxyphenyl)lactate + NADP(+) = 3-(3,4-dihydroxyphenyl)pyruvate + NADPH + H(+). The enzyme catalyses (2R)-3-(3,4-dihydroxyphenyl)lactate + NAD(+) = 3-(3,4-dihydroxyphenyl)pyruvate + NADH + H(+). Functionally, catalyzes the NAD(P)H-dependent reduction of 2-oxoglutarate, phenylpyruvate and (4-hydroxyphenyl)pyruvate, leading to the respective 2-hydroxycarboxylate in vitro. Shows a preference for NADPH over NADH as a redox partner. Do not catalyze the reverse reactions. The sequence is that of Hydroxycarboxylate dehydrogenase B from Escherichia coli (strain K12).